A 35-amino-acid chain; its full sequence is Photosystem II reaction center protein T (35 aa).

A helical membrane pass occupies residues 3–23 (ALVYTFLLIGTLGIIFFAIFF).

Belongs to the PsbT family. As to quaternary structure, PSII is composed of 1 copy each of membrane proteins PsbA, PsbB, PsbC, PsbD, PsbE, PsbF, PsbH, PsbI, PsbJ, PsbK, PsbL, PsbM, PsbT, PsbY, PsbZ, Psb30/Ycf12, at least 3 peripheral proteins of the oxygen-evolving complex and a large number of cofactors. It forms dimeric complexes.

The protein resides in the plastid. It is found in the chloroplast thylakoid membrane. Functionally, found at the monomer-monomer interface of the photosystem II (PS II) dimer, plays a role in assembly and dimerization of PSII. PSII is a light-driven water plastoquinone oxidoreductase, using light energy to abstract electrons from H(2)O, generating a proton gradient subsequently used for ATP formation. The polypeptide is Photosystem II reaction center protein T (Coleochaete orbicularis (Charophycean green alga)).